The following is a 264-amino-acid chain: Diphthine synthase (264 aa).

S-adenosyl-L-methionine contacts are provided by residues Leu10, Asp87, Val90, 115–116 (SI), Leu166, Ala209, and His234.

It belongs to the diphthine synthase family. Homodimer.

The enzyme catalyses 2-[(3S)-amino-3-carboxypropyl]-L-histidyl-[translation elongation factor 2] + 3 S-adenosyl-L-methionine = diphthine-[translation elongation factor 2] + 3 S-adenosyl-L-homocysteine + 3 H(+). It participates in protein modification; peptidyl-diphthamide biosynthesis. In terms of biological role, S-adenosyl-L-methionine-dependent methyltransferase that catalyzes the trimethylation of the amino group of the modified target histidine residue in translation elongation factor 2 (EF-2), to form an intermediate called diphthine. The three successive methylation reactions represent the second step of diphthamide biosynthesis. This chain is Diphthine synthase, found in Thermococcus kodakarensis (strain ATCC BAA-918 / JCM 12380 / KOD1) (Pyrococcus kodakaraensis (strain KOD1)).